Reading from the N-terminus, the 330-residue chain is tRNA uridine(34) hydroxylase (330 aa).

A Rhodanese domain is found at 123-217; it reads SDPEVILVDT…YLEEVKQEES (95 aa). Cys177 (cysteine persulfide intermediate) is an active-site residue.

The protein belongs to the TrhO family.

The enzyme catalyses uridine(34) in tRNA + AH2 + O2 = 5-hydroxyuridine(34) in tRNA + A + H2O. In terms of biological role, catalyzes oxygen-dependent 5-hydroxyuridine (ho5U) modification at position 34 in tRNAs. In Shewanella sp. (strain ANA-3), this protein is tRNA uridine(34) hydroxylase.